Consider the following 217-residue polypeptide: Tegument protein BKRF4 (217 aa).

The interval 1-217 is disordered; sequence MAMFLKSRGV…GNNNYNWPWL (217 aa). Positions 32 to 42 are enriched in polar residues; sequence YTLGSQASQSI. A compositionally biased stretch (acidic residues) spans 43-79; it reads QEEDVSDTDESDYSDEDEEIDLEEEYPSDEDPSEGSD. The interval 63-64 is interaction with host histones H3/H4; sequence DL. Residues 81–84 are interaction with host H2A/H2B; it reads DPSW. A compositionally biased stretch (acidic residues) spans 89 to 102; it reads SDESDYSESDEDEA. The segment covering 106–132 has biased composition (low complexity); sequence SQASRSSRVSPSTQQSSGLTPTPSFSR. Over residues 136 to 145 the composition is skewed to pro residues; it reads RAPPRPPAPA. Residues 208 to 217 show a composition bias toward polar residues; that stretch reads GNNNYNWPWL.

This sequence belongs to the lymphocryptovirus BKRF4 family. As to quaternary structure, forms a complex with the host H3/H4 dimer and histone chaperone ASF1. Also forms a complex with host H2A/H2B dimer. Interacts (via C-terminus) with BGLF2; this interaction is important for infectious virion production.

Its subcellular location is the virion tegument. It localises to the host nucleus. The protein resides in the host cytoplasm. The protein localises to the host perinuclear region. Functionally, histone-binding protein that binds to histones H2A/H2B, H3/H4 and cellular chromatin to overcome the host DNA damage response triggered by the viral genome ends. Interferes with histone ubiquitination and recruitment of repair proteins. This chain is Tegument protein BKRF4, found in Epstein-Barr virus (strain AG876) (HHV-4).